Consider the following 324-residue polypeptide: Tetrachlorobenzoquinone reductase (324 aa).

The region spanning 5 to 107 (VSTIDMTVTQ…VPPANNFALV (103 aa)) is the FAD-binding FR-type domain. Residues 238–324 (FTVVLARRSG…SKSPRLVLDI (87 aa)) form the 2Fe-2S ferredoxin-type domain. [2Fe-2S] cluster contacts are provided by Cys273, Cys278, Cys281, and Cys311.

It belongs to the PDR/VanB family. As to quaternary structure, homotrimer. The cofactor is FMN. [2Fe-2S] cluster is required as a cofactor.

It catalyses the reaction 2,3,5,6-tetrachlorohydroquinone + NAD(+) + H(+) = 2,3,5,6-tetrachloro-1,4-benzoquinone + NADH. It functions in the pathway xenobiotic degradation; pentachlorophenol degradation. In vitro, activated by tetrachlorohydroquinone (TCHQ) at low concentrations and inhibited at high concentrations (above 200 uM). However, PcpD would only be stimulated by tetrachlorohydroquinone (TCHQ) under in vivo conditions due to the toxicity of tetrachlorohydroquinone (TCHQ). Competitively inhibited by pentachlorophenol (PCP) in a concentration-dependent manner. PcpD is regulated by tetrachlorohydroquinone (TCHQ) and pentachlorophenol (PCP) using a mechanism, which maintains tetrachlorobenzoquinone at a level that would neither significantly decrease the biodegradation of pentachlorophenol (PCP) nor cause cytotoxicity in cells. In terms of biological role, involved in the degradation of the xenobiocide pentachlorophenol (PCP). Catalyzes the reduction of tetrachlorobenzoquinone (TCBQ) to yield tetrachlorohydroquinone (TCHQ). Also able to reduce 2,6-dichloroindophenol (DCIP). This chain is Tetrachlorobenzoquinone reductase, found in Sphingobium chlorophenolicum.